Here is a 502-residue protein sequence, read N- to C-terminus: Adenylate cyclase (502 aa).

Topologically, residues 1 to 25 (MGDFCRRVDCKAMKFFALRSSIRTQ) are cytoplasmic. Residues 26 to 46 (IMASTTLLILALIGAIVTVWA) traverse the membrane as a helical segment. The Lumenal, thylakoid portion of the chain corresponds to 47–203 (KSESTLYHQE…RKVNLAVTNA (157 aa)). The chain crosses the membrane as a helical span at residues 204–226 (VNQALVVGFAGLNIGWICAYFLA). Positions 227-280 (QHLSDPVRRLQISVAKIAGGDLQHRADIHSRADEIGALATSVNEMSAALQISFN) constitute an HAMP domain. Over 227–502 (QHLSDPVRRL…EAISIYEVKA (276 aa)) the chain is Cytoplasmic. Positions 320 to 451 (TILFCDIRGY…DAVNVASRIE (132 aa)) constitute a Guanylate cyclase domain. The Mg(2+) site is built by D325 and D369.

It belongs to the adenylyl cyclase class-3 family. Mg(2+) is required as a cofactor.

The protein localises to the cellular thylakoid membrane. It catalyses the reaction ATP = 3',5'-cyclic AMP + diphosphate. In terms of biological role, may function as a membrane-localized receptor protein. The chain is Adenylate cyclase (cya) from Anabaena cylindrica.